The following is a 121-amino-acid chain: Large ribosomal subunit protein uL18 (121 aa).

Belongs to the universal ribosomal protein uL18 family. In terms of assembly, part of the 50S ribosomal subunit; part of the 5S rRNA/L5/L18/L25 subcomplex. Contacts the 5S and 23S rRNAs.

Its function is as follows. This is one of the proteins that bind and probably mediate the attachment of the 5S RNA into the large ribosomal subunit, where it forms part of the central protuberance. The sequence is that of Large ribosomal subunit protein uL18 from Ureaplasma urealyticum serovar 10 (strain ATCC 33699 / Western).